Consider the following 502-residue polypeptide: Sporulation-specific protein 2 (502 aa).

A signal peptide spans 1 to 56; that stretch reads MPIWKTQTFFTSISVIQIVNKETKVSTKKEKDSMLNQLNTILRFLFLFLQLIKSSA. Residues asparagine 77, asparagine 135, asparagine 285, asparagine 303, asparagine 340, asparagine 343, and asparagine 355 are each glycosylated (N-linked (GlcNAc...) asparagine). Residues 441 to 474 form a disordered region; that stretch reads EGNVLGKQETDNDNGKKEKGKNGAKSQGSSKKME. Residues 448–461 show a composition bias toward basic and acidic residues; sequence QETDNDNGKKEKGK. Asparagine 475 carries GPI-anchor amidated asparagine lipidation. The propeptide at 476–502 is removed in mature form; sequence SAPKNIFIDAFKMSVYAVFTVLFSIIF.

Belongs to the SPS2 family.

It is found in the cell membrane. Its function is as follows. Involved in middle stages of meiosis. Redundant with SPS22 for the organization of the beta-glucan layer of the spore wall. The sequence is that of Sporulation-specific protein 2 (SPS2) from Saccharomyces cerevisiae (strain ATCC 204508 / S288c) (Baker's yeast).